The following is a 584-amino-acid chain: Membrane frizzled-related protein (584 aa).

Topologically, residues 1–69 are cytoplasmic; it reads MKDYDDVILR…QPDCHFSWFC (69 aa). A helical; Signal-anchor for type II membrane protein membrane pass occupies residues 70–90; that stretch reads ILLLSGLLLLLLGLLVAVILA. The Extracellular portion of the chain corresponds to 91–584; that stretch reads QLQATSLPRT…AASLEACSQP (494 aa). Residues 108–140 form a disordered region; it reads RGLTPMGVIPSTTPNTTTTTTTTTPARTGQQEA. Residues 119–132 show a composition bias toward low complexity; that stretch reads TTPNTTTTTTTTTP. Disulfide bonds link Cys150/Cys176 and Cys203/Cys222. Positions 150-259 constitute a CUB 1 domain; that stretch reads CGGLLPGPSG…SGFQAWYQAV (110 aa). Asn233 is a glycosylation site (N-linked (GlcNAc...) asparagine). The region spanning 265–301 is the LDL-receptor class A 1 domain; the sequence is SCAHNEFHCDLLLCLKRDSVCDGITECADGSDEANCS. 5 disulfides stabilise this stretch: Cys266–Cys278, Cys273–Cys291, Cys285–Cys300, Cys307–Cys333, and Cys360–Cys383. A CUB 2 domain is found at 307 to 420; it reads CGGNLTGLYG…GGFLATYQAI (114 aa). N-linked (GlcNAc...) asparagine glycosylation occurs at Asn421. Positions 426–460 constitute an LDL-receptor class A 2 domain; sequence GCPWAEFCQSGGYRDLQWMCDLWKDCANDSNDNCS. Intrachain disulfides connect Cys433–Cys451, Cys445–Cys459, Cys471–Cys533, Cys479–Cys526, Cys517–Cys554, Cys543–Cys581, and Cys547–Cys569. Asn458 is a glycosylation site (N-linked (GlcNAc...) asparagine). Positions 466-584 constitute an FZ domain; sequence QPDLTCEPVQ…AASLEACSQP (119 aa).

Interacts with C1QTNF5. Expressed in retinal pigment epithelium and ciliary epithelium of the eye.

The protein localises to the apical cell membrane. In terms of biological role, may play a role in eye development. This Mus musculus (Mouse) protein is Membrane frizzled-related protein (Mfrp).